Reading from the N-terminus, the 1935-residue chain is Myosin-7 (1935 aa).

Residues 32-81 (DLKKDVFVPDDKQEFVKAKIVSREGGKVTAETEYGKTVTVKEDQVMQQNP) form the Myosin N-terminal SH3-like domain. One can recognise a Myosin motor domain in the interval 85–778 (DKIEDMAMLT…LLGLLEEMRD (694 aa)). Residue Lys-129 is modified to N6,N6,N6-trimethyllysine. An ATP-binding site is contributed by 178–185 (GESGAGKT). A Phosphothreonine modification is found at Thr-378. 2 actin-binding regions span residues 655–677 (LNKL…IPNE) and 757–771 (KFGH…GLLG). Residues 781–810 (LSRIITRIQAQSRGVLARMEYKKLLERRDS) enclose the IQ domain. Residues 839–1935 (LLKSAEREKE…DIGTKGLNEE (1097 aa)) adopt a coiled-coil conformation. A phosphoserine mark is found at Ser-1137 and Ser-1269. Residue Thr-1282 is modified to Phosphothreonine. Position 1308 is a phosphotyrosine (Tyr-1308). Thr-1309 is subject to Phosphothreonine. Ser-1510 carries the post-translational modification Phosphoserine. Residue Thr-1513 is modified to Phosphothreonine. Residues 1907–1935 (EERADIAESQVNKLRAKSRDIGTKGLNEE) are disordered. Basic and acidic residues predominate over residues 1923 to 1935 (KSRDIGTKGLNEE).

The protein belongs to the TRAFAC class myosin-kinesin ATPase superfamily. Myosin family. Muscle myosin is a hexameric protein that consists of 2 heavy chain subunits (MHC), 2 alkali light chain subunits (MLC) and 2 regulatory light chain subunits (MLC-2). Interacts with ECPAS. Interacts (via C-terminus) with LRRC39. Both wild type and variant Gln-403 are detected in skeletal muscle (at protein level).

The protein localises to the cytoplasm. It localises to the myofibril. It is found in the sarcomere. In terms of biological role, myosins are actin-based motor molecules with ATPase activity essential for muscle contraction. Forms regular bipolar thick filaments that, together with actin thin filaments, constitute the fundamental contractile unit of skeletal and cardiac muscle. The protein is Myosin-7 (MYH7) of Homo sapiens (Human).